Reading from the N-terminus, the 297-residue chain is Lysenin (297 aa).

Positions 10–33 (EQIEVDVVAVWKEGYVYENRGSTS) are N-terminal cap domain. Residues 34-107 (VDQKITITKG…SKVIEHTITI (74 aa)) are beta-hairpin domain. The tract at residues 108–156 (PPTSKFTRWQLNADVGGADIEYMYLIDEVTPIGGTQSIPQVITSRAKII) is N-terminal cap domain. The interval 157-297 (VGRQIILGKT…EDKWILEVVG (141 aa)) is C-terminal receptor-binding domain. The an N-(acyl)-sphingosylphosphocholine site is built by lysine 185, serine 227, tyrosine 233, and tyrosine 282. Cysteine 272 and cysteine 283 form a disulfide bridge.

Belongs to the lysenin family. Binds to sphingomyelin as a monomer by using its C-terminal domain. Forms a nonamer when sphingomyelin/lysenin ratio is lower than ca 500. Oligomerization, but not binding, is influenced by the fluidity of sphingomyelin. Expressed by coelomocytes.

Its subcellular location is the secreted. The protein resides in the target cell membrane. Functionally, pore-forming toxin that defensively acts against parasitic microorganisms by forming pores in sphingomyelin-containing membranes. Has hemolytic activity and is also cytotoxic to spermatozoa of some species of invertebrates and many species of vertebrates and to amphibian larvae, guinea pig polymorphonuclear leukocytes, chicken fibroblasts, normal spleen cells and various tumor cells. Is lethal for various species of reptiles, amphibian, birds and mammals. Induces smooth muscle contraction. It binds sphingomyelin and induces hemolysis in the same manner as lysenin-related protein 2, and is 10-fold more effective than lysenin-related protein 1. The sequence is that of Lysenin from Eisenia fetida (Red wiggler worm).